The primary structure comprises 124 residues: Iron-sulfur cluster insertion protein ErpA (124 aa).

Residues C52, C116, and C118 each coordinate iron-sulfur cluster.

The protein belongs to the HesB/IscA family. Homodimer. It depends on iron-sulfur cluster as a cofactor.

Required for insertion of 4Fe-4S clusters for at least IspG. In Acidithiobacillus ferrooxidans (strain ATCC 23270 / DSM 14882 / CIP 104768 / NCIMB 8455) (Ferrobacillus ferrooxidans (strain ATCC 23270)), this protein is Iron-sulfur cluster insertion protein ErpA.